A 491-amino-acid polypeptide reads, in one-letter code: Glutamyl-tRNA(Gln) amidotransferase subunit A (491 aa).

Residues K78 and S158 each act as charge relay system in the active site. S182 serves as the catalytic Acyl-ester intermediate.

The protein belongs to the amidase family. GatA subfamily. Heterotrimer of A, B and C subunits.

It catalyses the reaction L-glutamyl-tRNA(Gln) + L-glutamine + ATP + H2O = L-glutaminyl-tRNA(Gln) + L-glutamate + ADP + phosphate + H(+). Its function is as follows. Allows the formation of correctly charged Gln-tRNA(Gln) through the transamidation of misacylated Glu-tRNA(Gln) in organisms which lack glutaminyl-tRNA synthetase. The reaction takes place in the presence of glutamine and ATP through an activated gamma-phospho-Glu-tRNA(Gln). This is Glutamyl-tRNA(Gln) amidotransferase subunit A from Nitrobacter winogradskyi (strain ATCC 25391 / DSM 10237 / CIP 104748 / NCIMB 11846 / Nb-255).